The chain runs to 242 residues: Ribonuclease PH (242 aa).

Residues arginine 87 and 125 to 127 (GTR) contribute to the phosphate site.

It belongs to the RNase PH family. Homohexameric ring arranged as a trimer of dimers.

It catalyses the reaction tRNA(n+1) + phosphate = tRNA(n) + a ribonucleoside 5'-diphosphate. Functionally, phosphorolytic 3'-5' exoribonuclease that plays an important role in tRNA 3'-end maturation. Removes nucleotide residues following the 3'-CCA terminus of tRNAs; can also add nucleotides to the ends of RNA molecules by using nucleoside diphosphates as substrates, but this may not be physiologically important. Probably plays a role in initiation of 16S rRNA degradation (leading to ribosome degradation) during starvation. The protein is Ribonuclease PH of Thermosynechococcus vestitus (strain NIES-2133 / IAM M-273 / BP-1).